A 940-amino-acid chain; its full sequence is Isoleucine--tRNA ligase (940 aa).

The 'HIGH' region signature appears at 58–68 (PYANGSIHIGH). Residue glutamate 564 participates in L-isoleucyl-5'-AMP binding. The 'KMSKS' region motif lies at 605 to 609 (KMSKS). Lysine 608 serves as a coordination point for ATP. The Zn(2+) site is built by cysteine 903, cysteine 906, cysteine 923, and cysteine 926.

The protein belongs to the class-I aminoacyl-tRNA synthetase family. IleS type 1 subfamily. In terms of assembly, monomer. Zn(2+) is required as a cofactor.

The protein localises to the cytoplasm. The catalysed reaction is tRNA(Ile) + L-isoleucine + ATP = L-isoleucyl-tRNA(Ile) + AMP + diphosphate. In terms of biological role, catalyzes the attachment of isoleucine to tRNA(Ile). As IleRS can inadvertently accommodate and process structurally similar amino acids such as valine, to avoid such errors it has two additional distinct tRNA(Ile)-dependent editing activities. One activity is designated as 'pretransfer' editing and involves the hydrolysis of activated Val-AMP. The other activity is designated 'posttransfer' editing and involves deacylation of mischarged Val-tRNA(Ile). The sequence is that of Isoleucine--tRNA ligase from Shewanella baltica (strain OS185).